Here is a 545-residue protein sequence, read N- to C-terminus: MLAARLIILLSFYWLSASAIDPADPLFVDLPHGKIRGRDNGFYYSYESLPYAEPPVGELRFEAPQPYKQQWTDTFDATQPPVTCMQWNQFIFGDNKLVGVEDCLTVSIYKPKNTSQSSFPVVAHMHGGAFMFGEARQNGHENMMREGKLILVKISYRLGPLGFASTGDADLSGNFGLKDQRLALLWIKQNIASFGGEPENIIVVGHSAGGASVHLQMLREDFAQVAKAGISFGGNAMDPWVIHQSARGRTFELGRIVGCGQASDSMELKNCLKSKPAGEIVSAVHSFLVFAYVPFAPFGPVVESPDAPEAFISQHPVDIIKSGKFAQVPWAVTYNTEDGGYNAAVLLEKQASSGRELIFDLNDHWFDWAPYLLFYRDSMTTIKDMDDYSRKLRQEYLGDRRFSVESYWDLQRLFTDILYKNATELALDLYRKHGKSPVYAFVYDNPANTGIGQFFAKRTDVHFGTVHGDEYFLIFENLARGPEMRSDEEIISRNFLNMINDFVVSGNGTMTFGNCVLQDNVGSNKFQLLSITKNGCENLQLESFP.

A signal peptide spans 1-19 (MLAARLIILLSFYWLSASA). The cysteines at positions 84 and 103 are disulfide-linked. Residue Asn113 is glycosylated (N-linked (GlcNAc...) asparagine). Catalysis depends on Ser207, which acts as the Acyl-ester intermediate. The cysteines at positions 259 and 271 are disulfide-linked. Asn421 is a glycosylation site (N-linked (GlcNAc...) asparagine). Residue His467 is the Charge relay system of the active site. Asn507 is a glycosylation site (N-linked (GlcNAc...) asparagine). A disulfide bond links Cys515 and Cys536.

It belongs to the type-B carboxylesterase/lipase family.

It is found in the secreted. It catalyses the reaction a carboxylic ester + H2O = an alcohol + a carboxylate + H(+). The polypeptide is Esterase-5C (Est-5C) (Drosophila pseudoobscura pseudoobscura (Fruit fly)).